Here is a 137-residue protein sequence, read N- to C-terminus: Ribosome-binding factor A (137 aa).

It belongs to the RbfA family. Monomer. Binds 30S ribosomal subunits, but not 50S ribosomal subunits or 70S ribosomes.

The protein localises to the cytoplasm. One of several proteins that assist in the late maturation steps of the functional core of the 30S ribosomal subunit. Associates with free 30S ribosomal subunits (but not with 30S subunits that are part of 70S ribosomes or polysomes). Required for efficient processing of 16S rRNA. May interact with the 5'-terminal helix region of 16S rRNA. This chain is Ribosome-binding factor A, found in Cereibacter sphaeroides (strain ATCC 17029 / ATH 2.4.9) (Rhodobacter sphaeroides).